A 295-amino-acid polypeptide reads, in one-letter code: GTPase Era (295 aa).

Positions lysine 3–glutamate 171 constitute an Era-type G domain. The tract at residues glycine 11 to serine 18 is G1. Glycine 11–serine 18 provides a ligand contact to GTP. The segment at glutamine 37 to asparagine 41 is G2. The interval aspartate 58–glycine 61 is G3. GTP-binding positions include aspartate 58–methionine 62 and asparagine 120–aspartate 123. Residues asparagine 120–aspartate 123 form a G4 region. A G5 region spans residues isoleucine 150–alanine 152. The KH type-2 domain maps to leucine 202–lysine 279.

It belongs to the TRAFAC class TrmE-Era-EngA-EngB-Septin-like GTPase superfamily. Era GTPase family. As to quaternary structure, monomer.

The protein localises to the cytoplasm. The protein resides in the cell membrane. In terms of biological role, an essential GTPase that binds both GDP and GTP, with rapid nucleotide exchange. Plays a role in 16S rRNA processing and 30S ribosomal subunit biogenesis and possibly also in cell cycle regulation and energy metabolism. The polypeptide is GTPase Era (Clostridium tetani (strain Massachusetts / E88)).